Here is a 224-residue protein sequence, read N- to C-terminus: GTP-binding protein RHO3 (224 aa).

22 to 29 (GDGACGKT) is a binding site for GTP. Residues 44-52 (YEPTVFENY) carry the Effector region motif. GTP contacts are provided by residues 69–73 (DTAGQ) and 127–130 (LKCD). The tract at residues 205–224 (TPKGARDSAPEAESSSCTIM) is disordered. Residue Cys221 is modified to Cysteine methyl ester. A lipid anchor (S-geranylgeranyl cysteine) is attached at Cys221. Residues 222–224 (TIM) constitute a propeptide, removed in mature form.

Belongs to the small GTPase superfamily. Rho family.

Its subcellular location is the cell membrane. Functionally, involved in the regulation of actin polarization. Rho proteins are required for distinct steps during polarized hyphal growth of A.gossypii. The protein is GTP-binding protein RHO3 (RHO3) of Eremothecium gossypii (strain ATCC 10895 / CBS 109.51 / FGSC 9923 / NRRL Y-1056) (Yeast).